Reading from the N-terminus, the 168-residue chain is Ribosome-binding factor A (168 aa).

Residues 122–136 (VRRDARPAGDDDPYR) show a composition bias toward basic and acidic residues. The disordered stretch occupies residues 122 to 168 (VRRDARPAGDDDPYRRPRPAAGEVDELSEVDELSEVDEYGGTARQEG). Over residues 144-159 (EVDELSEVDELSEVDE) the composition is skewed to acidic residues.

The protein belongs to the RbfA family. Monomer. Binds 30S ribosomal subunits, but not 50S ribosomal subunits or 70S ribosomes.

The protein localises to the cytoplasm. Its function is as follows. One of several proteins that assist in the late maturation steps of the functional core of the 30S ribosomal subunit. Associates with free 30S ribosomal subunits (but not with 30S subunits that are part of 70S ribosomes or polysomes). Required for efficient processing of 16S rRNA. May interact with the 5'-terminal helix region of 16S rRNA. The chain is Ribosome-binding factor A from Frankia casuarinae (strain DSM 45818 / CECT 9043 / HFP020203 / CcI3).